The following is a 327-amino-acid chain: Gonadotropin-releasing hormone receptor (327 aa).

Topologically, residues 1-38 are extracellular; it reads MANNASLEQDPNHCSAINNSIPLIQGKLPTLTVSGKIR. N-linked (GlcNAc...) asparagine glycans are attached at residues N4 and N18. A helical transmembrane segment spans residues 39–58; sequence VTVTFFLFLLSTAFNASFLL. Topologically, residues 59-77 are cytoplasmic; sequence KLQKWTQKRKKGKKLSRMK. The helical transmembrane segment at 78–97 threads the bilayer; sequence VLLKHLTLANLLETLIVMPL. The Extracellular segment spans residues 98–115; it reads DGMWNITVQWYAGEFLCK. N102 is a glycosylation site (N-linked (GlcNAc...) asparagine). An intrachain disulfide couples C114 to C195. Residues 116–137 form a helical membrane-spanning segment; the sequence is VLSYLKLFSMYAPAFMMVVISL. Over 138–164 the chain is Cytoplasmic; the sequence is DRSLAITQPLAVQSNSKLEQSMISLAW. A helical transmembrane segment spans residues 165 to 184; that stretch reads ILSIVFAGPQLYIFRMIYLA. The Extracellular segment spans residues 185–211; that stretch reads DGSGPTVFSQCVTHCSFPQWWHQAFYN. The helical transmembrane segment at 212–231 threads the bilayer; the sequence is FFTFGCLFIIPLLIMLICNA. Topologically, residues 232 to 280 are cytoplasmic; it reads KIIFALTRVLHQDPRKLQLNQSKNNIPRARLRTLKMTVAFATSFVVCWT. A helical transmembrane segment spans residues 281–299; that stretch reads PYYVLGIWYWFDPEMLNRV. Over 300–305 the chain is Extracellular; that stretch reads SEPVNH. A helical transmembrane segment spans residues 306 to 325; that stretch reads FFFLFAFLNPCFDPLIYGYF. Residues 326–327 lie on the Cytoplasmic side of the membrane; sequence SL.

This sequence belongs to the G-protein coupled receptor 1 family. Pituitary gland.

It localises to the cell membrane. Receptor for gonadotropin releasing hormone (GnRH) that mediates the action of GnRH to stimulate the secretion of the gonadotropic hormones luteinizing hormone (LH) and follicle-stimulating hormone (FSH). This receptor mediates its action by association with G-proteins that activate a phosphatidylinositol-calcium second messenger system. This is Gonadotropin-releasing hormone receptor (Gnrhr) from Mus musculus (Mouse).